The sequence spans 314 residues: Putative 4-hydroxy-2-oxoglutarate aldolase, mitochondrial (314 aa).

Substrate is bound at residue 50 to 51 (TN). Residue lysine 171 is the Schiff-base intermediate with substrate of the active site.

It belongs to the DapA family.

It carries out the reaction (4S)-4-hydroxy-2-oxoglutarate = glyoxylate + pyruvate. The enzyme catalyses (4R)-4-hydroxy-2-oxoglutarate = glyoxylate + pyruvate. In terms of biological role, may catalyze the final step in the metabolic pathway of hydroxyproline. The sequence is that of Putative 4-hydroxy-2-oxoglutarate aldolase, mitochondrial from Coccidioides immitis (strain RS) (Valley fever fungus).